The primary structure comprises 435 residues: AP-2 complex subunit mu (435 aa).

Position 45 is a phosphoserine (Ser-45). Thr-156 is modified (phosphothreonine). In terms of domain architecture, MHD spans 170–434; it reads RNELFLDVLE…IGRSGIYETR (265 aa). 3 residues coordinate a 1,2-diacyl-sn-glycero-3-phospho-(1D-myo-inositol-3,4,5-trisphosphate): Lys-341, Lys-345, and Lys-354.

It belongs to the adaptor complexes medium subunit family. Adaptor protein complex 2 (AP-2) is a heterotetramer composed of two large adaptins (alpha-type subunit AP2A1 or AP2A2 and beta-type subunit AP2B1), a medium adaptin (mu-type subunit AP2M1) and a small adaptin (sigma-type subunit AP2S1). Interacts with ATP6V1H and MEGF10. Interacts with EGFR and TTGN1. Interacts with F2R. Interacts with PIP5K1C; tyrosine phosphorylation of PIP5K1C weakens the interaction. Interacts with KIAA0319; required for clathrin-mediated endocytosis of KIAA0319. Interacts with DVL2 (via DEP domain). Interacts with KCNQ1; mediates estrogen-induced internalization via clathrin-coated vesicles. Interacts with P2RX4 (via internalization motif). Together with AP2A1 or AP2A2 and AP2B1, it interacts with ADAM10; this interaction facilitates ADAM10 endocytosis from the plasma membrane during long-term potentiation in hippocampal neurons. Probably interacts with ACE2 (via endocytic sorting signal motif); the interaction is inhibited by ACE2 phosphorylation. Interacts with RALBP1; the interaction is direct. Interacts with TMEM106B (via N-terminus). Post-translationally, phosphorylation at Thr-156 increases the affinity of the AP-2 complex for cargo membrane proteins during the initial stages of endocytosis.

It localises to the cell membrane. Its subcellular location is the membrane. The protein localises to the coated pit. In terms of biological role, component of the adaptor protein complex 2 (AP-2). Adaptor protein complexes function in protein transport via transport vesicles in different membrane traffic pathways. Adaptor protein complexes are vesicle coat components and appear to be involved in cargo selection and vesicle formation. AP-2 is involved in clathrin-dependent endocytosis in which cargo proteins are incorporated into vesicles surrounded by clathrin (clathrin-coated vesicles, CCVs) which are destined for fusion with the early endosome. The clathrin lattice serves as a mechanical scaffold but is itself unable to bind directly to membrane components. Clathrin-associated adaptor protein (AP) complexes which can bind directly to both the clathrin lattice and to the lipid and protein components of membranes are considered to be the major clathrin adaptors contributing the CCV formation. AP-2 also serves as a cargo receptor to selectively sort the membrane proteins involved in receptor-mediated endocytosis. AP-2 seems to play a role in the recycling of synaptic vesicle membranes from the presynaptic surface. AP-2 recognizes Y-X-X-[FILMV] (Y-X-X-Phi) and [ED]-X-X-X-L-[LI] endocytosis signal motifs within the cytosolic tails of transmembrane cargo molecules. AP-2 may also play a role in maintaining normal post-endocytic trafficking through the ARF6-regulated, non-clathrin pathway. During long-term potentiation in hippocampal neurons, AP-2 is responsible for the endocytosis of ADAM10. The AP-2 mu subunit binds to transmembrane cargo proteins; it recognizes the Y-X-X-Phi motifs. The surface region interacting with to the Y-X-X-Phi motif is inaccessible in cytosolic AP-2, but becomes accessible through a conformational change following phosphorylation of AP-2 mu subunit at Thr-156 in membrane-associated AP-2. The membrane-specific phosphorylation event appears to involve assembled clathrin which activates the AP-2 mu kinase AAK1. Plays a role in endocytosis of frizzled family members upon Wnt signaling. The chain is AP-2 complex subunit mu (AP2M1) from Bos taurus (Bovine).